Here is a 393-residue protein sequence, read N- to C-terminus: Chorismate synthase (393 aa).

The NADP(+) site is built by Arg40 and Arg46. FMN-binding positions include 129 to 131, 251 to 252, Gly301, 316 to 320, and Arg342; these read RAS, QA, and KPIST.

This sequence belongs to the chorismate synthase family. Homotetramer. FMNH2 serves as cofactor.

It carries out the reaction 5-O-(1-carboxyvinyl)-3-phosphoshikimate = chorismate + phosphate. It participates in metabolic intermediate biosynthesis; chorismate biosynthesis; chorismate from D-erythrose 4-phosphate and phosphoenolpyruvate: step 7/7. In terms of biological role, catalyzes the anti-1,4-elimination of the C-3 phosphate and the C-6 proR hydrogen from 5-enolpyruvylshikimate-3-phosphate (EPSP) to yield chorismate, which is the branch point compound that serves as the starting substrate for the three terminal pathways of aromatic amino acid biosynthesis. This reaction introduces a second double bond into the aromatic ring system. The chain is Chorismate synthase from Koribacter versatilis (strain Ellin345).